The primary structure comprises 366 residues: Histone-lysine N-methyltransferase SETD7 (366 aa).

MORN repeat units lie at residues 36–58 (FEGH…DGST), 59–81 (LEGF…DGGS), and 106–128 (FKGQ…DGGS). One can recognise an SET domain in the interval 214 to 336 (ERVYVNDSLI…KDEELTVAYG (123 aa)). S-adenosyl-L-methionine-binding positions include 226–228 (AGE), N296, and H297.

It belongs to the class V-like SAM-binding methyltransferase superfamily. Histone-lysine methyltransferase family. SET7 subfamily.

The protein resides in the nucleus. The protein localises to the chromosome. It carries out the reaction L-lysyl(4)-[histone H3] + S-adenosyl-L-methionine = N(6)-methyl-L-lysyl(4)-[histone H3] + S-adenosyl-L-homocysteine + H(+). The enzyme catalyses L-lysyl-[protein] + S-adenosyl-L-methionine = N(6)-methyl-L-lysyl-[protein] + S-adenosyl-L-homocysteine + H(+). Functionally, histone methyltransferase that specifically monomethylates 'Lys-4' of histone H3. H3 'Lys-4' methylation represents a specific tag for epigenetic transcriptional activation. Plays a central role in the transcriptional activation of genes. Also has methyltransferase activity toward non-histone proteins. The polypeptide is Histone-lysine N-methyltransferase SETD7 (setd7) (Xenopus tropicalis (Western clawed frog)).